Reading from the N-terminus, the 398-residue chain is 1-deoxy-D-xylulose 5-phosphate reductoisomerase (398 aa).

7 residues coordinate NADPH: threonine 11, glycine 12, serine 13, isoleucine 14, arginine 38, asparagine 39, and asparagine 125. A 1-deoxy-D-xylulose 5-phosphate-binding site is contributed by lysine 126. Glutamate 127 lines the NADPH pocket. Residue aspartate 151 coordinates Mn(2+). 1-deoxy-D-xylulose 5-phosphate contacts are provided by serine 152, glutamate 153, serine 179, and histidine 202. Glutamate 153 contributes to the Mn(2+) binding site. Glycine 208 contributes to the NADPH binding site. Positions 215, 220, 221, and 224 each coordinate 1-deoxy-D-xylulose 5-phosphate. Glutamate 224 is a Mn(2+) binding site.

It belongs to the DXR family. Mg(2+) serves as cofactor. The cofactor is Mn(2+).

The enzyme catalyses 2-C-methyl-D-erythritol 4-phosphate + NADP(+) = 1-deoxy-D-xylulose 5-phosphate + NADPH + H(+). Its pathway is isoprenoid biosynthesis; isopentenyl diphosphate biosynthesis via DXP pathway; isopentenyl diphosphate from 1-deoxy-D-xylulose 5-phosphate: step 1/6. In terms of biological role, catalyzes the NADPH-dependent rearrangement and reduction of 1-deoxy-D-xylulose-5-phosphate (DXP) to 2-C-methyl-D-erythritol 4-phosphate (MEP). This chain is 1-deoxy-D-xylulose 5-phosphate reductoisomerase, found in Burkholderia multivorans (strain ATCC 17616 / 249).